The sequence spans 73 residues: Capsid protein G8P (73 aa).

Positions 1–23 are cleaved as a signal peptide; the sequence is MKKSLVLKASVAVATLVPMLSFA. At 24-47 the chain is on the periplasmic side; it reads AEGDDPAKAAFNSLQASATEYIGY. Residues 48–68 form a helical membrane-spanning segment; sequence AWAMVVVIVGATIGIKLFKKF. Over 69–73 the chain is Cytoplasmic; it reads TSKAS.

Belongs to the inovirus capsid protein family. Homomultimerizes. There are about 2,700 copies of this protein in the phage capsid.

It localises to the virion. The protein resides in the host cell inner membrane. In terms of biological role, self assembles to form a helical capsid wrapping up the viral genomic DNA. The capsid displays a filamentous structure with a length of 760-1950 nm and a width of 6-8 nm. The virion assembly and budding take place at the host inner membrane. In Enterobacteria phage M13 (Bacteriophage M13), this protein is Capsid protein G8P (VIII).